Here is a 197-residue protein sequence, read N- to C-terminus: Putative RING-H2 finger protein ATL71 (197 aa).

A helical membrane pass occupies residues 20 to 40 (MGGLAYGIGVSIGILMLITTI). A disordered region spans residues 53-80 (SASPTTTPRTRRRQRESNGTLPPGQERF). The RING-type; atypical zinc-finger motif lies at 129–171 (CSICLADYKKMDMIRVLPDCNHLFHDNCVDPWLRLHPTCPVCR).

Belongs to the RING-type zinc finger family. ATL subfamily.

The protein resides in the membrane. The enzyme catalyses S-ubiquitinyl-[E2 ubiquitin-conjugating enzyme]-L-cysteine + [acceptor protein]-L-lysine = [E2 ubiquitin-conjugating enzyme]-L-cysteine + N(6)-ubiquitinyl-[acceptor protein]-L-lysine.. It participates in protein modification; protein ubiquitination. This is Putative RING-H2 finger protein ATL71 (ATL71) from Arabidopsis thaliana (Mouse-ear cress).